The sequence spans 181 residues: Large ribosomal subunit protein uL5 (181 aa).

Belongs to the universal ribosomal protein uL5 family. As to quaternary structure, part of the 50S ribosomal subunit; part of the 5S rRNA/L5/L18/L25 subcomplex. Contacts the 5S rRNA and the P site tRNA. Forms a bridge to the 30S subunit in the 70S ribosome.

Functionally, this is one of the proteins that bind and probably mediate the attachment of the 5S RNA into the large ribosomal subunit, where it forms part of the central protuberance. In the 70S ribosome it contacts protein S13 of the 30S subunit (bridge B1b), connecting the 2 subunits; this bridge is implicated in subunit movement. Contacts the P site tRNA; the 5S rRNA and some of its associated proteins might help stabilize positioning of ribosome-bound tRNAs. This is Large ribosomal subunit protein uL5 from Desulforamulus reducens (strain ATCC BAA-1160 / DSM 100696 / MI-1) (Desulfotomaculum reducens).